We begin with the raw amino-acid sequence, 466 residues long: Magnetosome-associated protein MamJ (466 aa).

Disordered regions lie at residues 1–23 and 60–80; these read MAKN…ISTG and ANQG…RSQD. Residues 1–24 are not required to restore magnetic response to deletion mutant; the sequence is MAKNRRDRGTDLPGDGDQKISTGP. Residues 25 to 80 are required to restore magnetic response to deletion mutant; it reads EIVSVTVHPSPNLAAAAKPVQGDIWASLLESSPWSANQGGLVETAQPPSAPIRSQD. 2 Tandem repeat unit repeats span residues 81-168 and 169-256; these read PVPV…VEPE and PAPV…VEPE. 4 not required to restore magnetic response to deletion mutant regions span residues 81–256, 136–334, 333–374, and 432–466; these read PVPV…VEPE, ETDA…SQAE, AESV…AVEA, and VGSN…DKNK. 3 Glu-Pro-rich motif repeats span residues 145 to 164, 233 to 252, and 253 to 272; these read IEPE…EAAE and VEPE…EAAE. Required to restore magnetic response to deletion mutant regions lie at residues 375-432 and 426-466; these read TRQP…GRLV and VKGG…DKNK.

It belongs to the magnetosome MamJ protein family. As to quaternary structure, forms homooligomers. Interacts with MamK. Identified by N-terminal sequencing of a protein that is about 96 kDa in size. The protein runs anomalously on protein gels.

The protein localises to the magnetosome. In terms of biological role, required for assembly of magnetosome chains. Regulates the dynamic behavior of MamK filaments. May connect magnetosomes to MamK filaments. Moves from the cell poles towards midcell; movement does not depend on the treadmilling ability of MamK, suggesting MamJ associates and disassociates continuously from the MamK filament. This is Magnetosome-associated protein MamJ from Magnetospirillum gryphiswaldense (strain DSM 6361 / JCM 21280 / NBRC 15271 / MSR-1).